A 676-amino-acid polypeptide reads, in one-letter code: GRB2-associated-binding protein 2 (676 aa).

Ser2 is subject to Phosphoserine. Residues 6 to 117 (DVVCTGWLRK…WVQSICQICG (112 aa)) enclose the PH domain. The tract at residues 127-178 (SLRNVSSAGHGPRSSPAELSSSSQHLLRERKSSAPSHSSQPTLFTFEPPVSN) is disordered. 11 positions are modified to phosphoserine: Ser133, Ser140, Ser141, Ser148, Ser149, Ser159, Ser164, Ser210, Ser218, Ser223, and Ser264. Low complexity predominate over residues 140-149 (SSPAELSSSS). Residues 159 to 169 (SAPSHSSQPTL) show a composition bias toward polar residues. At Thr265 the chain carries Phosphothreonine. Tyr266 carries the phosphotyrosine modification. Phosphothreonine is present on Thr278. Phosphoserine is present on residues Ser281 and Ser285. Residue Thr287 is modified to Phosphothreonine. Residue Tyr293 is modified to Phosphotyrosine. Thr331 is modified (phosphothreonine). The disordered stretch occupies residues 341–430 (VATPGDSAIA…RSAESMSDGV (90 aa)). An SH3-binding motif is present at residues 351 to 358 (PPPRPPKP). Residue Ser368 is modified to Phosphoserine. Residues Thr385 and Thr391 each carry the phosphothreonine modification. Ser405 carries the post-translational modification Phosphoserine. Thr408 bears the Phosphothreonine mark. 2 positions are modified to phosphoserine: Ser422 and Ser425. The residue at position 452 (Tyr452) is a Phosphotyrosine. Position 480 is a phosphoserine (Ser480). Residues 492 to 531 (PSTTLPVHRGPSRGSEIQPPPVNRNLKPDRKAKPTPLDLR) are disordered. The SH3-binding signature appears at 510-519 (PPPVNRNLKP). Ser543 bears the Phosphoserine mark. Composition is skewed to polar residues over residues 556 to 577 (FNSSSSQYCRPISTQSITSTDS) and 589 to 611 (NPVSASPVPSGTNSPAPKKSTGS). Disordered stretches follow at residues 556–643 (FNSS…KVDY) and 656–676 (NTMQEWTDVRQSSEPSKGAKL). Residues Ser622 and Ser623 each carry the phosphoserine modification. The residue at position 643 (Tyr643) is a Phosphotyrosine. Positions 656–670 (NTMQEWTDVRQSSEP) are enriched in polar residues.

The protein belongs to the GAB family. As to quaternary structure, part of a complex composed of EEIG1, TNFRSF11A/RANK, PLCG2, GAB2, TEC and BTK; complex formation increases in the presence of TNFSF11/RANKL. Interacts with SHC1; may mediate interaction with receptors. Interacts with SYK. Interacts with PI-3 kinase. Interacts with GRB2 (via SH3 2 domain). Interacts (phosphorylated) with PTPN11. Interacts with TNFRSF11A (via cytoplasmic domain). Interacts (phosphorylated) with 14-3-3 family proteins SFN, YWHAB, YWHAE, YWHAG, YWHAH, YWHAQ and YWHAZ; prevents interaction with GRB2 and attenuates GAB2 signaling. Interacts with HCK. In terms of processing, phosphorylated on tyrosine residue(s) by the thrombopoietin receptor (TPOR), stem cell factor receptor (SCFR), and T-cell and B-cell antigen receptors, gp130, IL-2R and IL-3R. Phosphorylated upon stimulation of TNFRSF11A/RANK by TNFSF11/RANKL. Phosphorylated upon EGF stimulation. Phosphorylated on tyrosine residues by HCK upon IL6 signaling. Dephosphorylated by PTPN11.

It is found in the cytoplasm. The protein resides in the cell membrane. It localises to the membrane raft. Functionally, adapter protein which acts downstream of several membrane receptors including cytokine, antigen, hormone, cell matrix and growth factor receptors to regulate multiple signaling pathways. Regulates osteoclast differentiation mediating the TNFRSF11A/RANK signaling. In allergic response, it plays a role in mast cells activation and degranulation through PI-3-kinase regulation. Also involved in the regulation of cell proliferation and hematopoiesis. This Homo sapiens (Human) protein is GRB2-associated-binding protein 2 (GAB2).